The following is a 234-amino-acid chain: MKTVVLSLGGSILIPELAKNRISAYLPVLKEIAGQHRVFVVVGGGGGARDYIAVARKLGIDEGTSDEIGILVTRLNATLLIAALGDAAYPKVAESHSEAKKFGESKKIVVMGGITPGQTTDAVAAVLAERVQADVFVNVTSVNGIYDKDPKSHPAAQHHATLTPKQLLSIVSQGGLGAGSHNVLDIIAARIVERSSIPLVVLDGTRPKNLSDVLLRGKGEYSVVSSTKKKVLPL.

10-11 (GS) is an ATP binding site. Position 44 (Gly44) interacts with UMP. The ATP site is built by Gly45 and Arg49. UMP contacts are provided by residues Asp66 and 114–120 (ITPGQTT). ATP-binding residues include Thr140, Tyr146, and Asp149.

This sequence belongs to the UMP kinase family. Homohexamer.

The protein localises to the cytoplasm. The catalysed reaction is UMP + ATP = UDP + ADP. It functions in the pathway pyrimidine metabolism; CTP biosynthesis via de novo pathway; UDP from UMP (UMPK route): step 1/1. Inhibited by UTP. Functionally, catalyzes the reversible phosphorylation of UMP to UDP. This is Uridylate kinase from Methanoregula boonei (strain DSM 21154 / JCM 14090 / 6A8).